Consider the following 391-residue polypeptide: Galactarate dehydratase (D-threo-forming) (391 aa).

A substrate-binding site is contributed by arginine 15. 2 residues coordinate Mg(2+): aspartate 42 and histidine 45. Residue tyrosine 89 participates in substrate binding. Residue tyrosine 90 is the Proton donor of the active site. Tyrosine 164 acts as the Proton acceptor in catalysis. The Mg(2+) site is built by aspartate 193, glutamate 221, and histidine 246. Threonine 296 provides a ligand contact to substrate. Threonine 297 contributes to the Mg(2+) binding site. Residue arginine 385 coordinates substrate.

This sequence belongs to the mandelate racemase/muconate lactonizing enzyme family. It depends on Mg(2+) as a cofactor.

The catalysed reaction is galactarate = (2S,3R)-dihydroxy-5-oxohexanedioate + H2O. Its function is as follows. Catalyzes the regioselective dehydration of galactarate into 2-keto-D-threo-4,5-dihydroxyadipate ((2S,3R)-dihydroxy-5-oxohexanedioate). Is not active on other acid sugars. This is Galactarate dehydratase (D-threo-forming) from Oceanobacillus iheyensis (strain DSM 14371 / CIP 107618 / JCM 11309 / KCTC 3954 / HTE831).